We begin with the raw amino-acid sequence, 127 residues long: Oleate-induced peroxisomal protein POX18 (127 aa).

Residues 14–119 form the SCP2 domain; sequence FKELHEGLAD…KATAIESVFK (106 aa). Residues 33-41 are hydrophobic; sequence AVNAVIVIT. A hydrophilic region spans residues 43–52; it reads KNKEGKEQSW.

Monomer.

It localises to the peroxisome. It participates in lipid metabolism; fatty acid metabolism. Its function is as follows. Is involved in beta-oxidation of long-chain fatty acids. Its exact function is unknown, but possesses a nonspecific lipid-transfer activity, despite the absence of a cysteine residue thought to be essential for the activity of its mammalian counterparts. This is Oleate-induced peroxisomal protein POX18 (POX18) from Candida maltosa (Yeast).